A 192-amino-acid polypeptide reads, in one-letter code: Thymidylate kinase (192 aa).

7–14 (GIDCVGKS) is an ATP binding site.

This sequence belongs to the thymidylate kinase family.

The catalysed reaction is dTMP + ATP = dTDP + ADP. Phosphorylation of dTMP to form dTDP in both de novo and salvage pathways of dTTP synthesis. The sequence is that of Thymidylate kinase from Campylobacter jejuni subsp. jejuni serotype O:23/36 (strain 81-176).